We begin with the raw amino-acid sequence, 711 residues long: Choline transporter-like protein 2 (711 aa).

Over 1-33 the chain is Cytoplasmic; sequence MGDERPHYYGKHGTPQKYDPTFKGPIYNRGCTD. Position 14 is a phosphothreonine (threonine 14). A helical transmembrane segment spans residues 34-54; it reads VICCVFLLVAIVGYVAVGIIA. The Extracellular segment spans residues 55-232; it reads WTHGDPRKVI…RIFEDYTVSW (178 aa). Residues asparagine 187 and asparagine 200 are each glycosylated (N-linked (GlcNAc...) asparagine). Residues 233 to 253 form a helical membrane-spanning segment; sequence YWIIIGLVIAMAMSLLFIILL. Topologically, residues 254 to 256 are cytoplasmic; sequence RFL. A helical transmembrane segment spans residues 257–277; sequence AGIMVWVMIIMVILVLGYGIF. The Extracellular segment spans residues 278–315; the sequence is HCYMEYSRLRGEAGSDVSLVDLGFQTDFRVYLHLRQTW. Residues 316-336 traverse the membrane as a helical segment; that stretch reads LAFMIILSILEVIIILLLIFL. The Cytoplasmic portion of the chain corresponds to 337–364; it reads RKRILIAIALIKEASRAVGYVMCTMLYP. A helical transmembrane segment spans residues 365 to 385; the sequence is LVTFFLLCLCIAYWASTAVFL. Topologically, residues 386–440 are extracellular; that stretch reads STSNEAVYKIFDDGLCPFTAKTCNPETFPSSNESRQCPNARCQFAFYGGESGYHR. A glycan (N-linked (GlcNAc...) asparagine) is linked at asparagine 417. The helical transmembrane segment at 441-461 threads the bilayer; that stretch reads ALLGLQIFNAFMFFWLANFVL. Residues 462 to 504 are Cytoplasmic-facing; it reads ALGQVTLAGAFASYYWALRKPDDLPAFPLFSAFGRALRYHTGS. The helical transmembrane segment at 505–525 threads the bilayer; that stretch reads LAFGALILAIVQIIRVILEYL. Residues 526-563 are Extracellular-facing; that stretch reads DQRLKAAENKFAKCLMTCLKCCFWCLEKFIKFLNRNAY. A helical transmembrane segment spans residues 564–584; that stretch reads IMIAIYGTNFCTSARNAFFLL. At 585–599 the chain is on the cytoplasmic side; sequence MRNIIRVAVLDKVTD. The helical transmembrane segment at 600-620 threads the bilayer; the sequence is FLFLLGKLLIVGSVGILAFFF. Residues 621–638 lie on the Extracellular side of the membrane; the sequence is FTHRIRIVQDTAPPLNYY. Residues 639 to 659 form a helical membrane-spanning segment; that stretch reads WVPILTVIVGSYLIAHGFFSV. Over 660-711 the chain is Cytoplasmic; sequence YGMCVDTLFLCFCEDLERNDGSQERPYFMSPELRDILLKGSAEEGKRAEAEE.

This sequence belongs to the CTL (choline transporter-like) family. As to quaternary structure, interacts with COCH. In terms of processing, N-glycosylated.

Its subcellular location is the cell membrane. The protein localises to the mitochondrion outer membrane. It catalyses the reaction choline(out) + n H(+)(in) = choline(in) + n H(+)(out). It carries out the reaction ethanolamine(out) + n H(+)(in) = ethanolamine(in) + n H(+)(out). Functionally, choline/H+ antiporter, mainly in mitochodria. Also acts as a low-affinity ethanolamine/H+ antiporter, regulating the supply of extracellular ethanolamine (Etn) for the CDP-Etn pathway, redistribute intracellular Etn and balance the CDP-Cho and CDP-Etn arms of the Kennedy pathway. The protein is Choline transporter-like protein 2 (SLC44A2) of Pongo abelii (Sumatran orangutan).